Consider the following 118-residue polypeptide: Hydrogenase maturation factor HypA (118 aa).

Ni(2+) is bound at residue histidine 2. Positions 73, 76, 89, and 92 each coordinate Zn(2+).

The protein belongs to the HypA/HybF family.

In terms of biological role, involved in the maturation of [NiFe] hydrogenases. Required for nickel insertion into the metal center of the hydrogenase. The protein is Hydrogenase maturation factor HypA of Shewanella sp. (strain MR-7).